A 329-amino-acid chain; its full sequence is Minor capsid protein A1 (329 aa).

The protein resides in the virion. Its function is as follows. Minor capsid protein. The polypeptide is Minor capsid protein A1 (Escherichia coli (Bacteriophage Q-beta)).